The chain runs to 420 residues: Tyrosine--tRNA ligase (420 aa).

Tyrosine 36 is an L-tyrosine binding site. The short motif at proline 41–histidine 50 is the 'HIGH' region element. L-tyrosine contacts are provided by tyrosine 170 and glutamine 174. Positions lysine 231–serine 235 match the 'KMSKS' region motif. Residue lysine 234 participates in ATP binding. Residues serine 353–lysine 420 form the S4 RNA-binding domain.

The protein belongs to the class-I aminoacyl-tRNA synthetase family. TyrS type 1 subfamily. Homodimer.

Its subcellular location is the cytoplasm. It carries out the reaction tRNA(Tyr) + L-tyrosine + ATP = L-tyrosyl-tRNA(Tyr) + AMP + diphosphate + H(+). Its function is as follows. Catalyzes the attachment of tyrosine to tRNA(Tyr) in a two-step reaction: tyrosine is first activated by ATP to form Tyr-AMP and then transferred to the acceptor end of tRNA(Tyr). In Staphylococcus haemolyticus (strain JCSC1435), this protein is Tyrosine--tRNA ligase.